Here is a 373-residue protein sequence, read N- to C-terminus: Histidinol-phosphate aminotransferase 2 (373 aa).

Residue Lys229 is modified to N6-(pyridoxal phosphate)lysine.

The protein belongs to the class-II pyridoxal-phosphate-dependent aminotransferase family. Histidinol-phosphate aminotransferase subfamily. Homodimer. The cofactor is pyridoxal 5'-phosphate.

The enzyme catalyses L-histidinol phosphate + 2-oxoglutarate = 3-(imidazol-4-yl)-2-oxopropyl phosphate + L-glutamate. The protein operates within amino-acid biosynthesis; L-histidine biosynthesis; L-histidine from 5-phospho-alpha-D-ribose 1-diphosphate: step 7/9. The protein is Histidinol-phosphate aminotransferase 2 of Hydrogenovibrio crunogenus (strain DSM 25203 / XCL-2) (Thiomicrospira crunogena).